A 408-amino-acid polypeptide reads, in one-letter code: FAD-dependent monooxygenase nscC (408 aa).

An N-terminal signal peptide occupies residues 1 to 20 (MASRLPILIIGAGISGLTTA). Glu34 and Ala45 together coordinate FAD. 2 N-linked (GlcNAc...) asparagine glycosylation sites follow: Asn91 and Asn103. Arg119 contacts FAD. Residues Asn170 and Asn231 are each glycosylated (N-linked (GlcNAc...) asparagine). Residues Asp328 and Gly341 each coordinate FAD.

This sequence belongs to the paxM FAD-dependent monooxygenase family. The cofactor is FAD.

The protein operates within secondary metabolite biosynthesis. Functionally, FAD-dependent monooxygenase; part of the gene cluster that mediates the biosynthesis of neosartoricin, a prenylated anthracenone that exhibits T-cell antiproliferative activity, suggestive of a physiological role as an immunosuppressive agent. The non-reducing polyketide synthase nscA probably synthesizes and cyclizes the decaketide backbone. The hydrolase nscB then mediates the product release through hydrolysis followed by spontaneous decarboxylation. The prenyltransferase nscD catalyzes the addition of the dimethylallyl group to the aromatic C5. The FAD-dependent monooxygenase nscC is then responsible for the stereospecific hydroxylation at C2. There is no gene encoding O-acetyltransferase in the nsc gene cluster; thus, the last step of 2-O-acetylation leading to neosartoricin may be catalyzed by an unidentified O-acetyltransferase. This chain is FAD-dependent monooxygenase nscC, found in Aspergillus fumigatus (strain ATCC MYA-4609 / CBS 101355 / FGSC A1100 / Af293) (Neosartorya fumigata).